The following is a 244-amino-acid chain: 1-(5-phosphoribosyl)-5-[(5-phosphoribosylamino)methylideneamino] imidazole-4-carboxamide isomerase (244 aa).

Residue Asp8 is the Proton acceptor of the active site. Asp129 serves as the catalytic Proton donor.

It belongs to the HisA/HisF family.

The protein resides in the cytoplasm. It carries out the reaction 1-(5-phospho-beta-D-ribosyl)-5-[(5-phospho-beta-D-ribosylamino)methylideneamino]imidazole-4-carboxamide = 5-[(5-phospho-1-deoxy-D-ribulos-1-ylimino)methylamino]-1-(5-phospho-beta-D-ribosyl)imidazole-4-carboxamide. The protein operates within amino-acid biosynthesis; L-histidine biosynthesis; L-histidine from 5-phospho-alpha-D-ribose 1-diphosphate: step 4/9. In Bradyrhizobium sp. (strain ORS 278), this protein is 1-(5-phosphoribosyl)-5-[(5-phosphoribosylamino)methylideneamino] imidazole-4-carboxamide isomerase.